A 272-amino-acid chain; its full sequence is 3-methyl-2-oxobutanoate hydroxymethyltransferase (272 aa).

The Mg(2+) site is built by aspartate 43 and aspartate 82. 3-methyl-2-oxobutanoate-binding positions include 43 to 44 (DS), aspartate 82, and lysine 112. A Mg(2+)-binding site is contributed by glutamate 114. Glutamate 179 (proton acceptor) is an active-site residue.

The protein belongs to the PanB family. As to quaternary structure, homodecamer; pentamer of dimers. Mg(2+) is required as a cofactor.

The protein resides in the cytoplasm. The enzyme catalyses 3-methyl-2-oxobutanoate + (6R)-5,10-methylene-5,6,7,8-tetrahydrofolate + H2O = 2-dehydropantoate + (6S)-5,6,7,8-tetrahydrofolate. The protein operates within cofactor biosynthesis; (R)-pantothenate biosynthesis; (R)-pantoate from 3-methyl-2-oxobutanoate: step 1/2. Its function is as follows. Catalyzes the reversible reaction in which hydroxymethyl group from 5,10-methylenetetrahydrofolate is transferred onto alpha-ketoisovalerate to form ketopantoate. This is 3-methyl-2-oxobutanoate hydroxymethyltransferase from Staphylococcus aureus (strain COL).